Here is a 236-residue protein sequence, read N- to C-terminus: MDFSQGLTPARLIRRYKRFLADVEIEDGTIITVYCPNTGTMRTCSTPNSPVMLSISDNPKRKYAHTLEMIFENHTWIGVNTGRTNSIVAKAILNGSIAEFSGATKVQREITVSKGSRLDLLVDHADQKSYIEIKNCSMAENRRAMFPDAVTARGTKHLRELIKLVKQGENAYIFFLIQREDADSFSPATHIDPLYANTLKEALQQGVQALAYQASVILRALPIILNGSNSPHLPQR.

Belongs to the SfsA family.

The sequence is that of Sugar fermentation stimulation protein homolog from Desulfotalea psychrophila (strain LSv54 / DSM 12343).